A 683-amino-acid chain; its full sequence is E3 ubiquitin-protein ligase WAVH1 (683 aa).

Residues 130 to 176 (CGICLQSVKSGQGTAIFTAECSHTFHFPCVTSRAAANHNRLASCPVC) form an RING-type; atypical zinc finger. One can recognise a VWFA domain in the interval 302 to 438 (DLVAVLDVSG…AHSRIPIHTI (137 aa)).

As to expression, expressed in root tips and leaf primordia.

The catalysed reaction is S-ubiquitinyl-[E2 ubiquitin-conjugating enzyme]-L-cysteine + [acceptor protein]-L-lysine = [E2 ubiquitin-conjugating enzyme]-L-cysteine + N(6)-ubiquitinyl-[acceptor protein]-L-lysine.. Functionally, E3 ubiquitin-protein ligase involved in the regulation of root growth. Acts as a positive regulator of root gravitropism. Possesses E3 protein ligase activity in vitro. The chain is E3 ubiquitin-protein ligase WAVH1 from Arabidopsis thaliana (Mouse-ear cress).